The chain runs to 240 residues: MNKSGMSLIITMLLLIGTAIVIGAAYYAWSNKVFSDTTEKITPTIKSSIGNIIKPIEISTIETYYFTNLDLNGDSRITNNPEERFIQTIKLEFINNIDEDLNVNTRIYCLTPNVSWASVNIDDSSNNLLLDRDENPYNYSGQYVYFNGTVYYSSMKFYDENGKLFYAAASNGNALNTSNLLDLIDLNCPTESFLLKGNSKTDINYYILINNTKVPNTIIFEIIASTKYGDVEKKITFEIS.

An N-terminal signal peptide occupies residues 1-30 (MNKSGMSLIITMLLLIGTAIVIGAAYYAWS).

This is an uncharacterized protein from Methanocaldococcus jannaschii (strain ATCC 43067 / DSM 2661 / JAL-1 / JCM 10045 / NBRC 100440) (Methanococcus jannaschii).